Here is a 433-residue protein sequence, read N- to C-terminus: MLRAKHIGKNYSSSLSPVLSPEHKPSLLESQAIGTVATAQANFMRVIVQDVANSVTSDDDNDSSKTGVELLCVVRAVLKKIRRRVLVGDKVLVGSIDWVDRRGMIENVFHRRSEILDPPVANVDHLLVLFSLDQPKLEPFTLTRFLVEAESTRIPLTLALNKTELISEEELETWKIRLRGWNYEPLFCSVGTKDGLDDIAFVLRDQTSVIVGPSGVGKSSLINVLRSNHGGGVVEDENWFEPMLGNKWFDDQRVGEVSSRSGRGKHTTRNVSLLPVSEGGYLADTPGFNQPSLLKVTKHSLAHCFPEIRNMIESEKCGFRDCLHIGEPGCVVKGDWERYPYYLQLLDEIRIREEFQLRTFGTKREDDVRYKVGDMGVKHAEPRLMPKKHRRESRKKTKQTMISELDEFEDEDSDLYIENDPIVQAIENENKRQ.

The segment at 1-20 (MLRAKHIGKNYSSSLSPVLS) is disordered. One can recognise a CP-type G domain in the interval 113–291 (SEILDPPVAN…LADTPGFNQP (179 aa)). 212–220 (GPSGVGKSS) provides a ligand contact to GTP. Zn(2+) contacts are provided by cysteine 317, cysteine 322, histidine 324, and cysteine 330.

It belongs to the TRAFAC class YlqF/YawG GTPase family. RsgA subfamily. Monomer. Associates with 30S ribosomal subunit, binds 16S rRNA. It depends on Zn(2+) as a cofactor.

The protein resides in the mitochondrion. In terms of biological role, one of several proteins that assist in the late maturation steps of the functional core of the 30S ribosomal subunit. Helps release RbfA from mature subunits. May play a role in the assembly of ribosomal proteins into the subunit. Circularly permuted GTPase that catalyzes slow GTP hydrolysis, GTPase activity is stimulated by the 30S ribosomal subunit. Required for embryo development. The chain is Small ribosomal subunit biogenesis GTPase RsgA 1, mitochondrial from Arabidopsis thaliana (Mouse-ear cress).